The chain runs to 644 residues: Coiled-coil domain-containing protein 22 homolog (644 aa).

Residues 316 to 341 (DEQKAAAMAGLSESGPPKMDTEEELQ) form a disordered region. Coiled-coil stretches lie at residues 333–383 (KMDT…NEQV), 409–486 (DAEN…GKDD), and 592–644 (GVIM…LKSS).

It belongs to the CCDC22 family.

In Nematostella vectensis (Starlet sea anemone), this protein is Coiled-coil domain-containing protein 22 homolog.